A 506-amino-acid chain; its full sequence is ATP synthase subunit alpha (506 aa).

170 to 177 (GDRQTGKT) serves as a coordination point for ATP.

This sequence belongs to the ATPase alpha/beta chains family. As to quaternary structure, F-type ATPases have 2 components, CF(1) - the catalytic core - and CF(0) - the membrane proton channel. CF(1) has five subunits: alpha(3), beta(3), gamma(1), delta(1), epsilon(1). CF(0) has four main subunits: a(1), b(1), b'(1) and c(9-12).

It localises to the cellular thylakoid membrane. The catalysed reaction is ATP + H2O + 4 H(+)(in) = ADP + phosphate + 5 H(+)(out). Produces ATP from ADP in the presence of a proton gradient across the membrane. The alpha chain is a regulatory subunit. This is ATP synthase subunit alpha from Parasynechococcus marenigrum (strain WH8102).